Consider the following 76-residue polypeptide: Exodeoxyribonuclease 7 small subunit (76 aa).

The protein belongs to the XseB family. In terms of assembly, heterooligomer composed of large and small subunits.

Its subcellular location is the cytoplasm. It catalyses the reaction Exonucleolytic cleavage in either 5'- to 3'- or 3'- to 5'-direction to yield nucleoside 5'-phosphates.. Functionally, bidirectionally degrades single-stranded DNA into large acid-insoluble oligonucleotides, which are then degraded further into small acid-soluble oligonucleotides. The chain is Exodeoxyribonuclease 7 small subunit from Staphylococcus epidermidis (strain ATCC 35984 / DSM 28319 / BCRC 17069 / CCUG 31568 / BM 3577 / RP62A).